The primary structure comprises 276 residues: Putative respiratory nitrate reductase heme subunit ORF7 (276 aa).

Residues Met138 and Lys228 each contribute to the heme b site.

As to quaternary structure, probable multiprotein complex; a catalytic heterodimer of an alpha and beta chain is proposed to associate with additional subunits involved in membrane attachment and electron transfer. The cofactor is heme b.

It is found in the cell membrane. Functionally, the respiratory membrane-bound nitrate reductase enzyme complex plays a role in generation of metabolic energy by using nitrate as a terminal electron acceptor during anaerobic conditions. May transfer electrons to the iron-sulfur centers of the catalytic beta subunit. The protein is Putative respiratory nitrate reductase heme subunit ORF7 of Haloferax mediterranei (strain ATCC 33500 / DSM 1411 / JCM 8866 / NBRC 14739 / NCIMB 2177 / R-4) (Halobacterium mediterranei).